A 529-amino-acid chain; its full sequence is Pre-rRNA-processing protein pro-1 (529 aa).

2 WD repeats span residues 136–175 (AHYQ…SADR) and 287–326 (GHSD…CLKV). Residues 416 to 518 (ARNEAAKAEK…LKEINKQMYE (103 aa)) are a coiled coil. The disordered stretch occupies residues 436–470 (TLGDDEDDAPEVGNQRRKSGKKNKKNRKNQKKNDF). A compositionally biased stretch (basic residues) spans 450 to 465 (QRRKSGKKNKKNRKNQ).

It belongs to the WD repeat IPI3/WDR18 family. As to quaternary structure, component of the PELP1 complex, composed of at least PELP1, TEX10 and WDR18. The complex interacts with pre-60S ribosome particles.

The protein resides in the nucleus. It is found in the nucleolus. Its subcellular location is the nucleoplasm. In terms of biological role, component of the PELP1 complex involved in the nucleolar steps of 28S rRNA maturation and the subsequent nucleoplasmic transit of the pre-60S ribosomal subunit. Required for processing ITS2 sequences from rRNA intermediates during 26S rRNA maturation. Required in the soma to promote normal proliferation and prevent germline tumor formation. This is Pre-rRNA-processing protein pro-1 from Caenorhabditis elegans.